Here is a 907-residue protein sequence, read N- to C-terminus: Probable disease resistance protein At1g58390 (907 aa).

Positions 144–456 (QGDRQREMRQ…AEGISTAEDY (313 aa)) constitute an NB-ARC domain. 190–197 (GMGGLGKT) contributes to the ATP binding site. LRR repeat units lie at residues 608 to 631 (LIHL…LGNL) and 843 to 868 (MPLL…RFIY).

It belongs to the disease resistance NB-LRR family.

Possible disease resistance protein. This Arabidopsis thaliana (Mouse-ear cress) protein is Probable disease resistance protein At1g58390.